Consider the following 499-residue polypeptide: Alpha-amylase A type-3 (499 aa).

The signal sequence occupies residues 1-21 (MMVAWWSLFLYGLQVAAPALA). A disulfide bond links Cys51 and Cys59. Trp104 contributes to the substrate binding site. Ca(2+) is bound at residue Asn142. Position 143 (His143) interacts with substrate. The cysteines at positions 171 and 185 are disulfide-linked. 2 residues coordinate Ca(2+): Glu183 and Asp196. Asn218 carries N-linked (GlcNAc...) asparagine glycosylation. Arg225 is a binding site for substrate. Residues Asp227, His231, and Glu251 each contribute to the Ca(2+) site. Asp227 (nucleophile) is an active-site residue. Substrate is bound at residue 230–231 (KH). Glu251 acts as the Proton donor in catalysis. Gly255 contacts substrate. Cys261 and Cys304 are oxidised to a cystine. Arg365 contacts substrate. A disulfide bridge connects residues Cys461 and Cys496.

This sequence belongs to the glycosyl hydrolase 13 family. In terms of assembly, monomer. Ca(2+) is required as a cofactor.

The protein resides in the secreted. The catalysed reaction is Endohydrolysis of (1-&gt;4)-alpha-D-glucosidic linkages in polysaccharides containing three or more (1-&gt;4)-alpha-linked D-glucose units.. In Aspergillus oryzae (strain ATCC 42149 / RIB 40) (Yellow koji mold), this protein is Alpha-amylase A type-3 (amy3).